Here is a 334-residue protein sequence, read N- to C-terminus: D-aspartate oxidase 1 (334 aa).

FAD is bound by residues Asp-35, Arg-36, Ser-43, Gly-307, and Thr-312. The Microbody targeting signal signature appears at 332–334 (SKL).

Belongs to the DAMOX/DASOX family. It depends on FAD as a cofactor. In terms of tissue distribution, expressed in the intestinal cells, hypodermis and in unidentified cells in the head in adult hermaphrodites.

Its subcellular location is the peroxisome matrix. The enzyme catalyses D-aspartate + O2 + H2O = oxaloacetate + H2O2 + NH4(+). It carries out the reaction D-glutamate + O2 + H2O = H2O2 + 2-oxoglutarate + NH4(+). With respect to regulation, not inhibited by potassium bromide or thiolactomycin. Selectively catalyzes the oxidative deamination of acidic amino acids. May play a role in the egg-laying events and early development of the worm, in addition to quality control of the germ cells. The protein is D-aspartate oxidase 1 (ddo-1) of Caenorhabditis elegans.